Here is a 427-residue protein sequence, read N- to C-terminus: MLDIKLFRNDPEFLKEKVAKRGMDSKVVDEVLELDEQRRQLISQAEEMKAERNKVSGEIAQKKRNKEDADDAIAAMRNLGDEIKVLDDTLNQVDVDLNDKLSRIPNIIHDDVPEGATDEDNIEVKRWGTPRTFEFEDKAHWDLVEELEMVDFERAAKVSGARFVFLTGDGAQLERALMNYMITKHTTQHGYTEMMVPQLVNADSMYGTGQLPKFEEDLFKVEKEGLYTIPTAEVPLTNYYRNEIIAPDVLPAKFTAQSACYRSEAGSAGRDTRGLIRLHQFDKVEMVRIEKPEDSWQALEDMTHHAEAILEELGLPYRRVILCTGDIGFGSSKTYDLEVWLPSYNDYKEISSCSNITDFQARRSNIRFKRDKNAKPELAHTLNGSGLAVGRTFAAIVENYQNEDGSVTIPEVLVPFMGGKTVIRPTK.

231 to 233 (TAE) is an L-serine binding site. Position 262 to 264 (262 to 264 (RSE)) interacts with ATP. Residue Glu-285 coordinates L-serine. 349–352 (EISS) is an ATP binding site. Residue Ser-385 coordinates L-serine.

It belongs to the class-II aminoacyl-tRNA synthetase family. Type-1 seryl-tRNA synthetase subfamily. As to quaternary structure, homodimer. The tRNA molecule binds across the dimer.

Its subcellular location is the cytoplasm. It catalyses the reaction tRNA(Ser) + L-serine + ATP = L-seryl-tRNA(Ser) + AMP + diphosphate + H(+). It carries out the reaction tRNA(Sec) + L-serine + ATP = L-seryl-tRNA(Sec) + AMP + diphosphate + H(+). Its pathway is aminoacyl-tRNA biosynthesis; selenocysteinyl-tRNA(Sec) biosynthesis; L-seryl-tRNA(Sec) from L-serine and tRNA(Sec): step 1/1. Catalyzes the attachment of serine to tRNA(Ser). Is also able to aminoacylate tRNA(Sec) with serine, to form the misacylated tRNA L-seryl-tRNA(Sec), which will be further converted into selenocysteinyl-tRNA(Sec). This chain is Serine--tRNA ligase, found in Staphylococcus saprophyticus subsp. saprophyticus (strain ATCC 15305 / DSM 20229 / NCIMB 8711 / NCTC 7292 / S-41).